The chain runs to 579 residues: Putative laccase-9 (579 aa).

The first 27 residues, 1–27 (MGTAKLPALLWLLAGVVLALAVNPAHG), serve as a signal peptide directing secretion. Plastocyanin-like domains lie at 36-152 (FITE…PKRG) and 162-319 (KEIP…YTDS). Asn41 and Asn82 each carry an N-linked (GlcNAc...) asparagine glycan. Positions 86 and 88 each coordinate Cu cation. Asn114 carries an N-linked (GlcNAc...) asparagine glycan. Cu cation-binding residues include His131 and His133. 3 N-linked (GlcNAc...) asparagine glycosylation sites follow: Asn307, Asn405, and Asn446. The Plastocyanin-like 3 domain occupies 436–563 (PTAFVDPPVN…DTVFIVKDGK (128 aa)). Residues His480, His483, and His485 each contribute to the Cu cation site. N-linked (GlcNAc...) asparagine glycosylation occurs at Asn496. 5 residues coordinate Cu cation: His542, Cys543, His544, His548, and Met553.

This sequence belongs to the multicopper oxidase family. The cofactor is Cu cation.

It is found in the secreted. The protein localises to the extracellular space. The protein resides in the apoplast. The enzyme catalyses 4 hydroquinone + O2 = 4 benzosemiquinone + 2 H2O. Lignin degradation and detoxification of lignin-derived products. This Oryza sativa subsp. japonica (Rice) protein is Putative laccase-9 (LAC9).